The following is a 168-amino-acid chain: Small ribosomal subunit protein uS5 (168 aa).

One can recognise an S5 DRBM domain in the interval 14–77; the sequence is FEERVVSINR…EAAKKNLITV (64 aa).

The protein belongs to the universal ribosomal protein uS5 family. Part of the 30S ribosomal subunit. Contacts proteins S4 and S8.

In terms of biological role, with S4 and S12 plays an important role in translational accuracy. Functionally, located at the back of the 30S subunit body where it stabilizes the conformation of the head with respect to the body. In Lactococcus lactis subsp. lactis (strain IL1403) (Streptococcus lactis), this protein is Small ribosomal subunit protein uS5.